Reading from the N-terminus, the 439-residue chain is CBL-interacting serine/threonine-protein kinase 20 (439 aa).

One can recognise a Protein kinase domain in the interval 12-266 (YELGRLLGQG…IEKIMENSWF (255 aa)). Residues 18–26 (LGQGTFAKV) and K41 contribute to the ATP site. D134 acts as the Proton acceptor in catalysis. Residues 152 to 181 (DFGLSALRESKQQDGLLHTTCGTPAYVAPE) are activation loop. S156 is modified (phosphoserine). T170 carries the post-translational modification Phosphothreonine. The NAF domain maps to 297–322 (VKPMSYNAFDLISSLSQGFDLSGLFE). Positions 326–356 (RSESKFTTKKDAKEIVSKFEEIATSSERFNL) are PPI.

It belongs to the protein kinase superfamily. CAMK Ser/Thr protein kinase family. SNF1 subfamily. It depends on Mn(2+) as a cofactor. Autophosphorylated. Confined to mature leaves.

The enzyme catalyses L-seryl-[protein] + ATP = O-phospho-L-seryl-[protein] + ADP + H(+). It catalyses the reaction L-threonyl-[protein] + ATP = O-phospho-L-threonyl-[protein] + ADP + H(+). Its function is as follows. CIPK serine-threonine protein kinases interact with CBL proteins. Binding of a CBL protein to the regulatory NAF domain of CIPK protein lead to the activation of the kinase in a calcium-dependent manner. Required for the abscisic acid-mediated (ABA) signaling pathway involved in seed germination and growth elongation inhibition. This chain is CBL-interacting serine/threonine-protein kinase 20 (CIPK20), found in Arabidopsis thaliana (Mouse-ear cress).